Consider the following 502-residue polypeptide: Arginine decarboxylase (502 aa).

Position 42 is an N6-(pyridoxal phosphate)lysine (Lys42). Substrate is bound at residue 226-236 (IDIGGGLGIDY).

This sequence belongs to the Orn/Lys/Arg decarboxylase class-II family. SpeA subfamily. Requires pyridoxal 5'-phosphate as cofactor. The cofactor is Mg(2+).

It carries out the reaction L-arginine + H(+) = agmatine + CO2. It functions in the pathway amine and polyamine biosynthesis; agmatine biosynthesis; agmatine from L-arginine: step 1/1. The polypeptide is Arginine decarboxylase (Solanum lycopersicum (Tomato)).